We begin with the raw amino-acid sequence, 217 residues long: Peptide methionine sulfoxide reductase MsrA (217 aa).

The active site involves Cys56.

This sequence belongs to the MsrA Met sulfoxide reductase family.

It catalyses the reaction L-methionyl-[protein] + [thioredoxin]-disulfide + H2O = L-methionyl-(S)-S-oxide-[protein] + [thioredoxin]-dithiol. The enzyme catalyses [thioredoxin]-disulfide + L-methionine + H2O = L-methionine (S)-S-oxide + [thioredoxin]-dithiol. In terms of biological role, has an important function as a repair enzyme for proteins that have been inactivated by oxidation. Catalyzes the reversible oxidation-reduction of methionine sulfoxide in proteins to methionine. This is Peptide methionine sulfoxide reductase MsrA from Corynebacterium glutamicum (strain R).